The following is a 156-amino-acid chain: Small ribosomal subunit protein uS7 (156 aa).

The protein belongs to the universal ribosomal protein uS7 family. Part of the 30S ribosomal subunit. Contacts proteins S9 and S11.

Functionally, one of the primary rRNA binding proteins, it binds directly to 16S rRNA where it nucleates assembly of the head domain of the 30S subunit. Is located at the subunit interface close to the decoding center, probably blocks exit of the E-site tRNA. This Clostridium botulinum (strain Kyoto / Type A2) protein is Small ribosomal subunit protein uS7.